The chain runs to 348 residues: Holliday junction branch migration complex subunit RuvB (348 aa).

Positions 1-181 (MEERMITPQQ…FGVISRLEFY (181 aa)) are large ATPase domain (RuvB-L). Positions 20, 21, 62, 65, 66, 67, 171, 181, and 218 each coordinate ATP. Residue threonine 66 coordinates Mg(2+). Residues 182 to 252 (EVEDLIRIIT…LAGKSLDRLE (71 aa)) are small ATPAse domain (RuvB-S). The interval 255-348 (PAGLDRIDQK…GDSLFDAAED (94 aa)) is head domain (RuvB-H). DNA is bound by residues arginine 310 and arginine 315. Positions 329 to 348 (VNSSHQEGGQGDSLFDAAED) are disordered.

The protein belongs to the RuvB family. In terms of assembly, homohexamer. Forms an RuvA(8)-RuvB(12)-Holliday junction (HJ) complex. HJ DNA is sandwiched between 2 RuvA tetramers; dsDNA enters through RuvA and exits via RuvB. An RuvB hexamer assembles on each DNA strand where it exits the tetramer. Each RuvB hexamer is contacted by two RuvA subunits (via domain III) on 2 adjacent RuvB subunits; this complex drives branch migration. In the full resolvosome a probable DNA-RuvA(4)-RuvB(12)-RuvC(2) complex forms which resolves the HJ.

Its subcellular location is the cytoplasm. It catalyses the reaction ATP + H2O = ADP + phosphate + H(+). Its function is as follows. The RuvA-RuvB-RuvC complex processes Holliday junction (HJ) DNA during genetic recombination and DNA repair, while the RuvA-RuvB complex plays an important role in the rescue of blocked DNA replication forks via replication fork reversal (RFR). RuvA specifically binds to HJ cruciform DNA, conferring on it an open structure. The RuvB hexamer acts as an ATP-dependent pump, pulling dsDNA into and through the RuvAB complex. RuvB forms 2 homohexamers on either side of HJ DNA bound by 1 or 2 RuvA tetramers; 4 subunits per hexamer contact DNA at a time. Coordinated motions by a converter formed by DNA-disengaged RuvB subunits stimulates ATP hydrolysis and nucleotide exchange. Immobilization of the converter enables RuvB to convert the ATP-contained energy into a lever motion, pulling 2 nucleotides of DNA out of the RuvA tetramer per ATP hydrolyzed, thus driving DNA branch migration. The RuvB motors rotate together with the DNA substrate, which together with the progressing nucleotide cycle form the mechanistic basis for DNA recombination by continuous HJ branch migration. Branch migration allows RuvC to scan DNA until it finds its consensus sequence, where it cleaves and resolves cruciform DNA. The polypeptide is Holliday junction branch migration complex subunit RuvB (Desulfitobacterium hafniense (strain DSM 10664 / DCB-2)).